The sequence spans 83 residues: Small proline-rich protein 2A3 (83 aa).

5 consecutive repeat copies span residues 21-29 (PKCPEPCPP), 30-38 (QVWPGPCRP), 39-47 (VMCFEPCLP), 48-56 (SVWPGPCRP), and 57-65 (VVCYEQCPP). The 5 X 9 AA approximate tandem repeats stretch occupies residues 21-65 (PKCPEPCPPQVWPGPCRPVMCFEPCLPSVWPGPCRPVVCYEQCPP).

It belongs to the cornifin (SPRR) family. In terms of processing, forms five pairs of intrachain disulfide bonds.

The protein resides in the secreted. The protein localises to the extracellular space. Its subcellular location is the cytoplasmic vesicle. It is found in the secretory vesicle. Functionally, gut bactericidal protein that selectively kills Gram-positive bacteria by binding to negatively charged lipids on bacterial membranes, leading to bacterial membrane permeabilization and disruption. Specifically binds lipids bearing negatively charged headgroups, such as phosphatidic acid, phosphatidylserine (PS), cardiolipin (CL), and phosphatidylinositol phosphates, but not to zwitterionic or neutral lipids. Induced by type-2 cytokines in response to helminth infection and is required to protect against helminth-induced bacterial invasion of intestinal tissue. May also be involved in the development of the cornified envelope of squamous epithelia; however, additional evidences are required to confirm this result in vivo. The sequence is that of Small proline-rich protein 2A3 from Mus musculus (Mouse).